The primary structure comprises 449 residues: Na(+)/H(+) antiporter NhaA 2 (449 aa).

The next 11 membrane-spanning stretches (helical) occupy residues 32 to 52, 87 to 107, 114 to 134, 145 to 165, 174 to 194, 202 to 222, 233 to 253, 318 to 338, 347 to 367, 382 to 402, and 417 to 437; these read IEAT…TLSN, GLMT…VVLG, MVAL…GLYL, GWGV…ALLG, VFLL…VAVG, TALA…LLGV, AIIW…GVIL, WVAF…PITI, LAVM…FAWL, WGGL…ALFI, and LGIL…LCAL.

This sequence belongs to the NhaA Na(+)/H(+) (TC 2.A.33) antiporter family.

It localises to the cell inner membrane. It carries out the reaction Na(+)(in) + 2 H(+)(out) = Na(+)(out) + 2 H(+)(in). Functionally, na(+)/H(+) antiporter that extrudes sodium in exchange for external protons. This chain is Na(+)/H(+) antiporter NhaA 2, found in Acidiphilium cryptum (strain JF-5).